Reading from the N-terminus, the 294-residue chain is UDP-3-O-acyl-N-acetylglucosamine deacetylase (294 aa).

The Zn(2+) site is built by H75, H232, and D236. The Proton donor role is filled by H259.

This sequence belongs to the LpxC family. Requires Zn(2+) as cofactor.

It carries out the reaction a UDP-3-O-[(3R)-3-hydroxyacyl]-N-acetyl-alpha-D-glucosamine + H2O = a UDP-3-O-[(3R)-3-hydroxyacyl]-alpha-D-glucosamine + acetate. It functions in the pathway glycolipid biosynthesis; lipid IV(A) biosynthesis; lipid IV(A) from (3R)-3-hydroxytetradecanoyl-[acyl-carrier-protein] and UDP-N-acetyl-alpha-D-glucosamine: step 2/6. In terms of biological role, catalyzes the hydrolysis of UDP-3-O-myristoyl-N-acetylglucosamine to form UDP-3-O-myristoylglucosamine and acetate, the committed step in lipid A biosynthesis. The chain is UDP-3-O-acyl-N-acetylglucosamine deacetylase from Sulfurimonas denitrificans (strain ATCC 33889 / DSM 1251) (Thiomicrospira denitrificans (strain ATCC 33889 / DSM 1251)).